The primary structure comprises 528 residues: Calcium-dependent protein kinase 4 (528 aa).

Residues 1–36 are disordered; that stretch reads MGQEVSSVNNTKNEHHKTNKKSLKGGNERHEMKESS. A lipid anchor (N-myristoyl glycine) is attached at Gly-2. Over residues 14–23 the composition is skewed to basic residues; sequence EHHKTNKKSL. In terms of domain architecture, Protein kinase spans 71 to 329; that stretch reads KGIKILGKGS…RDALEHEWIK (259 aa). ATP-binding positions include 76-84 and Lys-99; that span reads LGKGSFGEV. Catalysis depends on Asp-193, which acts as the Proton acceptor. Positions 350 to 358 match the J domain autoinhibitory motif motif; sequence NIRQFQSTQ. Positions 350–386 are j domain; the sequence is NIRQFQSTQKLAQAALLYMGSKLTTIDETKELTKIFK. Residues 359–368 carry the J domain EF-hand interaction motif motif; it reads KLAQAALLYM. EF-hand domains follow at residues 376–411, 427–458, 459–494, and 496–528; these read DETKELTKIFKKMDKNGDGQLDRNELIIGYKELLKL, EVDQILNSIDLDQNGYIEYSEFLTVSIDRKLL, LSTERLEKAFKLFDKDGSGKISANELAQLFGLSDVS, and ECWKTVLKEVDQNNDGEIDFKEFRDMLVKLCNY. Asp-389, Asn-391, Asp-393, Gln-395, Glu-400, Asp-436, Asp-438, Asn-440, Tyr-442, Glu-447, Asp-472, Asp-474, Ser-476, Lys-478, Glu-483, Asp-506, Asn-508, Asp-510, Glu-512, and Glu-517 together coordinate Ca(2+).

Belongs to the protein kinase superfamily. Ser/Thr protein kinase family. CDPK subfamily. As to quaternary structure, may interact with the pre-replication MCM complex prior male gametogenesis activation. The cofactor is Mg(2+). In terms of processing, myristoylated; myristoylation may target it to different subcellular compartments. During male gametogenesis, myristoylation is required to initiate DNA replication but not for mitotic spindle assembly or axoneme activation. Not palmitoylated. Post-translationally, may be autophosphorylated on Thr-234 in vitro.

The protein localises to the cytoplasm. It is found in the cell membrane. The enzyme catalyses L-seryl-[protein] + ATP = O-phospho-L-seryl-[protein] + ADP + H(+). It catalyses the reaction L-threonyl-[protein] + ATP = O-phospho-L-threonyl-[protein] + ADP + H(+). Its activity is regulated as follows. Activated by calcium. Upon calcium binding to the EF-hand domains, the C-terminus of the junction domain (J domain) undergoes a conformational change which results in the dissociation of the pseudo-substrate inhibitory motif from the catalytic domain. This, in turn, may facilitate the autophosphorylation of the activation loop at Thr-234, which leads to the kinase activation. Intracellular calcium increase is triggered by xanthurenic acid (XA), a small mosquito molecule that induces the differentiation of specialized transmission stages, the gametocytes, into male and female gametes. Activated by a decrease in temperature (20 degrees Celsius) and an increase in pH (7.6) occurring when the parasite is ingested by in the mosquito. Its function is as follows. Calcium-dependent protein kinase which acts as a sensor and effector of intracellular Ca(2+) levels probably in part downstream of cGMP-activated PKG kinase. Plays a central role in the host erythrocytes and hepatocytes infection cycles, sexual reproduction and mosquito transmission of the parasite. During the liver stage, involved in sporozoite motility and thus in sporozoite invasion of host hepatocytes, probably together with CDPK1 and CDPK5. Involved in merosome egress from host hepatocytes, probably together with CDPK5. During the asexual blood stage, involved in merozoite invasion of host erythrocytes and motility by stabilizing the inner membrane complex, a structure below the plasma membrane which acts as an anchor for the glidosome, an acto-myosin motor. Required for cell cycle progression in the male gametocyte. During male gametogenesis in the mosquito gut, required to initiate the first round of DNA replication, probably by facilitating the assembly of the pre-replicative MCM complex, to assemble the first mitotic spindle and, at the end of gametogenesis, to initiate axoneme motility, cytokinesis and subsequent exflagellation. For each of these steps, may phosphorylate SOC1, SOC2 and SOC3, respectively. Together with CDPK1, regulates ookinete gliding in the mosquito host midgut. The chain is Calcium-dependent protein kinase 4 from Plasmodium falciparum (isolate 3D7).